The following is a 92-amino-acid chain: uncharacterized protein (92 aa).

This is an uncharacterized protein from Mycobacterium tuberculosis (strain CDC 1551 / Oshkosh).